The sequence spans 325 residues: Homeobox protein Hox-A1a (325 aa).

The Antp-type hexapeptide signature appears at 187 to 192; sequence TFDWMK. Disordered regions lie at residues 194-215 and 264-325; these read KRNP…PNTV and RMKQ…YPSN. The segment at residues 212–271 is a DNA-binding region (homeobox); that stretch reads PNTVRTNFTTKQLTELEKEFHFNKYLTRARRVEIAAALQLNETQVKIWFQNRRMKQKKRE. A compositionally biased stretch (basic and acidic residues) spans 285-300; sequence SGERNQEKVEDGESEK. Low complexity predominate over residues 301–317; it reads SVSAPSTPSPTSSTVSS.

Belongs to the Antp homeobox family. Labial subfamily.

The protein localises to the nucleus. Sequence-specific transcription factor which is part of a developmental regulatory system that provides cells with specific positional identities on the anterior-posterior axis. The chain is Homeobox protein Hox-A1a (hoxa1a) from Takifugu rubripes (Japanese pufferfish).